A 227-amino-acid polypeptide reads, in one-letter code: PKHD-type hydroxylase Veis_3084 (227 aa).

Positions 27-51 (DDGKDSAGTQARQAKNNQQLPRDSE) are disordered. Over residues 33-47 (AGTQARQAKNNQQLP) the composition is skewed to polar residues. Residues 78–179 (RVFPPRVNRY…RMACFFWVES (102 aa)) form the Fe2OG dioxygenase domain. Residues histidine 97, aspartate 99, and histidine 160 each coordinate Fe cation. A 2-oxoglutarate-binding site is contributed by arginine 170.

The cofactor is Fe(2+). L-ascorbate is required as a cofactor.

The sequence is that of PKHD-type hydroxylase Veis_3084 from Verminephrobacter eiseniae (strain EF01-2).